The primary structure comprises 106 residues: ATP-dependent Clp protease adapter protein ClpS (106 aa).

Belongs to the ClpS family. As to quaternary structure, binds to the N-terminal domain of the chaperone ClpA.

Functionally, involved in the modulation of the specificity of the ClpAP-mediated ATP-dependent protein degradation. In Pseudoalteromonas atlantica (strain T6c / ATCC BAA-1087), this protein is ATP-dependent Clp protease adapter protein ClpS.